A 214-amino-acid polypeptide reads, in one-letter code: Phosphatidylserine decarboxylase proenzyme (214 aa).

Ser-182 functions as the Schiff-base intermediate with substrate; via pyruvic acid in the catalytic mechanism. At Ser-182 the chain carries Pyruvic acid (Ser); by autocatalysis.

Belongs to the phosphatidylserine decarboxylase family. PSD-A subfamily. Heterodimer of a large membrane-associated beta subunit and a small pyruvoyl-containing alpha subunit. Pyruvate serves as cofactor. Post-translationally, is synthesized initially as an inactive proenzyme. Formation of the active enzyme involves a self-maturation process in which the active site pyruvoyl group is generated from an internal serine residue via an autocatalytic post-translational modification. Two non-identical subunits are generated from the proenzyme in this reaction, and the pyruvate is formed at the N-terminus of the alpha chain, which is derived from the carboxyl end of the proenzyme. The post-translation cleavage follows an unusual pathway, termed non-hydrolytic serinolysis, in which the side chain hydroxyl group of the serine supplies its oxygen atom to form the C-terminus of the beta chain, while the remainder of the serine residue undergoes an oxidative deamination to produce ammonia and the pyruvoyl prosthetic group on the alpha chain.

It is found in the cell membrane. It carries out the reaction a 1,2-diacyl-sn-glycero-3-phospho-L-serine + H(+) = a 1,2-diacyl-sn-glycero-3-phosphoethanolamine + CO2. The protein operates within phospholipid metabolism; phosphatidylethanolamine biosynthesis; phosphatidylethanolamine from CDP-diacylglycerol: step 2/2. Functionally, catalyzes the formation of phosphatidylethanolamine (PtdEtn) from phosphatidylserine (PtdSer). This Burkholderia cenocepacia (strain ATCC BAA-245 / DSM 16553 / LMG 16656 / NCTC 13227 / J2315 / CF5610) (Burkholderia cepacia (strain J2315)) protein is Phosphatidylserine decarboxylase proenzyme.